The primary structure comprises 960 residues: Leucine-rich repeat receptor-like serine/threonine-protein kinase SKM1 (960 aa).

Residues 1–29 form the signal peptide; it reads MSTSHHHHHPPYLITTLFFLFLNFSCLHA. At 30–634 the chain is on the extracellular side; that stretch reads NELELLLSFK…VRKRSTKSWW (605 aa). A disulfide bridge connects residues C61 and C68. N70, N83, N103, N108, N129, and N134 each carry an N-linked (GlcNAc...) asparagine glycan. LRR repeat units follow at residues 71–96, 97–120, 122–146, 149–168, 169–194, 196–216, 217–240, 241–264, 265–288, 290–312, 313–336, 338–360, 361–384, 386–408, 409–432, 434–454, 455–477, 478–501, 503–525, 526–549, 550–573, and 575–598; these read ISRV…TFRL, PFLQ…IFTT, SPSL…FLPN, TLDL…IGVF, SNLR…NLSR, EFLT…LGKM, KNLK…IGGL, SSLN…LGDL, KKLE…IFSL, NLIS…VAQM, QSLE…VTSL, RLKV…LGKH, NNLT…LCDS, HLTK…LGMC, QSLE…FTKL, LVNF…TWDM, PQLE…FSRS, KRLK…LMTF, EIMD…LSSC, KNLV…FAEF, QVLS…LGNI, and SLVQ…AFLA. The N-linked (GlcNAc...) asparagine glycan is linked to N191. The CLE45 peptide binding signature appears at 221–226; sequence WIYLGY. N-linked (GlcNAc...) asparagine glycans are attached at residues N228 and N252. A glycan (N-linked (GlcNAc...) asparagine) is linked at N324. N-linked (GlcNAc...) asparagine glycosylation is found at N362 and N372. An N-linked (GlcNAc...) asparagine glycan is attached at N537. N580 and N600 each carry an N-linked (GlcNAc...) asparagine glycan. The chain crosses the membrane as a helical span at residues 635–655; sequence LIITSTFAAFLAVLVSGFFIV. The Cytoplasmic segment spans residues 656-960; that stretch reads LVFQRTHNVL…TYLSKILSLA (305 aa). In terms of domain architecture, Protein kinase spans 691–953; the sequence is FTVNTILSSL…SSSSSCTTYL (263 aa). T692 is modified (phosphothreonine). Residues 697-705 and K717 each bind ATP; that span reads LSSLKDQNV. Y834 carries the post-translational modification Phosphotyrosine.

Belongs to the protein kinase superfamily. Ser/Thr protein kinase family. Self-interacts. Binds to CLE45 present in the pistil, particularly under relatively high temperature (at 30 degrees Celsius). Expressed in pollen grains and roots vascular tissues. Present in roots.

The protein localises to the cell membrane. The enzyme catalyses L-seryl-[protein] + ATP = O-phospho-L-seryl-[protein] + ADP + H(+). It catalyses the reaction L-threonyl-[protein] + ATP = O-phospho-L-threonyl-[protein] + ADP + H(+). In terms of biological role, receptor with a serine/threonine-protein kinase activity. Together with SKM2, LRR-rich receptor-like kinase (LRR-RLK) required for male fertility by the perception of CLE43 and CLE45 peptides and the transduction of their promoting action in pollen tubes, especially under relatively high temperature (at 30 degrees Celsius), thus conferring tolerance against high temperature probably through the maintenance of mitochondrial activity. Seems to not be involved in the perception of CLE45 peptide in roots. The polypeptide is Leucine-rich repeat receptor-like serine/threonine-protein kinase SKM1 (Arabidopsis thaliana (Mouse-ear cress)).